The sequence spans 63 residues: Cytochrome c oxidase subunit 7C, mitochondrial (63 aa).

The N-terminal 16 residues, 1 to 16 (MLGHSIRRFTTSVVRR), are a transit peptide targeting the mitochondrion. The Mitochondrial matrix segment spans residues 17–33 (SHYEEGPGKNLPFSVKN). An N6-acetyllysine; alternate modification is found at lysine 25. Lysine 25 carries the post-translational modification N6-succinyllysine; alternate. The helical transmembrane segment at 34 to 60 (KWALLVKMSLYFGSAFATPFLIVRHQL) threads the bilayer. The Mitochondrial intermembrane portion of the chain corresponds to 61–63 (LKQ).

It belongs to the cytochrome c oxidase VIIc family. Component of the cytochrome c oxidase (complex IV, CIV), a multisubunit enzyme composed of 14 subunits. The complex is composed of a catalytic core of 3 subunits MT-CO1, MT-CO2 and MT-CO3, encoded in the mitochondrial DNA, and 11 supernumerary subunits COX4I, COX5A, COX5B, COX6A, COX6B, COX6C, COX7A, COX7B, COX7C, COX8 and NDUFA4, which are encoded in the nuclear genome. The complex exists as a monomer or a dimer and forms supercomplexes (SCs) in the inner mitochondrial membrane with NADH-ubiquinone oxidoreductase (complex I, CI) and ubiquinol-cytochrome c oxidoreductase (cytochrome b-c1 complex, complex III, CIII), resulting in different assemblies (supercomplex SCI(1)III(2)IV(1) and megacomplex MCI(2)III(2)IV(2)). Interacts with RAB5IF.

Its subcellular location is the mitochondrion inner membrane. Its pathway is energy metabolism; oxidative phosphorylation. In terms of biological role, component of the cytochrome c oxidase, the last enzyme in the mitochondrial electron transport chain which drives oxidative phosphorylation. The respiratory chain contains 3 multisubunit complexes succinate dehydrogenase (complex II, CII), ubiquinol-cytochrome c oxidoreductase (cytochrome b-c1 complex, complex III, CIII) and cytochrome c oxidase (complex IV, CIV), that cooperate to transfer electrons derived from NADH and succinate to molecular oxygen, creating an electrochemical gradient over the inner membrane that drives transmembrane transport and the ATP synthase. Cytochrome c oxidase is the component of the respiratory chain that catalyzes the reduction of oxygen to water. Electrons originating from reduced cytochrome c in the intermembrane space (IMS) are transferred via the dinuclear copper A center (CU(A)) of subunit 2 and heme A of subunit 1 to the active site in subunit 1, a binuclear center (BNC) formed by heme A3 and copper B (CU(B)). The BNC reduces molecular oxygen to 2 water molecules using 4 electrons from cytochrome c in the IMS and 4 protons from the mitochondrial matrix. The protein is Cytochrome c oxidase subunit 7C, mitochondrial (COX7C) of Papio hamadryas (Hamadryas baboon).